Reading from the N-terminus, the 248-residue chain is MAPRKFFVGGNWKMNGDKKSLGELIHTLNGAKLSADTEVVCGAPSIYLDFARQKLDAKIGVAAQNCYKVPKGAFTGEISPAMIKDIGAAWVILGHSERRHVFGESDELIGQKVAHALAEGLGVIACIGEKLDEREAGITEKVVFEQTKAIADNVKDWSKVVLAYEPVWAIGTGKTATPQQAQEVHEKLRGWLKSHVSDAVAQSTRIIYGGSVTGGNCKELASQHDVDGFLVGGASLKPEFVDIINAKH.

Substrate-binding residues include Asn-11 and Lys-13. Catalysis depends on His-95, which acts as the Electrophile. The active-site Proton acceptor is the Glu-165.

The protein belongs to the triosephosphate isomerase family. As to quaternary structure, homodimer.

The protein resides in the cytoplasm. It catalyses the reaction dihydroxyacetone phosphate = methylglyoxal + phosphate. The enzyme catalyses D-glyceraldehyde 3-phosphate = dihydroxyacetone phosphate. It functions in the pathway carbohydrate degradation; glycolysis; D-glyceraldehyde 3-phosphate from glycerone phosphate: step 1/1. Its pathway is carbohydrate biosynthesis; gluconeogenesis. In terms of biological role, triosephosphate isomerase is an extremely efficient metabolic enzyme that catalyzes the interconversion between dihydroxyacetone phosphate (DHAP) and D-glyceraldehyde-3-phosphate (G3P) in glycolysis and gluconeogenesis. Functionally, it is also responsible for the non-negligible production of methylglyoxal a reactive cytotoxic side-product that modifies and can alter proteins, DNA and lipids. The chain is Triosephosphate isomerase (TPI1) from Gallus gallus (Chicken).